The chain runs to 504 residues: 2,3-bisphosphoglycerate-independent phosphoglycerate mutase (504 aa).

Mn(2+)-binding residues include Asp-11 and Ser-61. Ser-61 acts as the Phosphoserine intermediate in catalysis. Substrate is bound by residues His-122, 152 to 153 (RD), Arg-183, Arg-189, 255 to 258 (RNDR), and Lys-329. Residues Asp-396, His-400, Asp-437, His-438, and His-455 each coordinate Mn(2+).

The protein belongs to the BPG-independent phosphoglycerate mutase family. As to quaternary structure, monomer. Requires Mn(2+) as cofactor.

The enzyme catalyses (2R)-2-phosphoglycerate = (2R)-3-phosphoglycerate. It functions in the pathway carbohydrate degradation; glycolysis; pyruvate from D-glyceraldehyde 3-phosphate: step 3/5. Its function is as follows. Catalyzes the interconversion of 2-phosphoglycerate and 3-phosphoglycerate. In Bacteroides thetaiotaomicron (strain ATCC 29148 / DSM 2079 / JCM 5827 / CCUG 10774 / NCTC 10582 / VPI-5482 / E50), this protein is 2,3-bisphosphoglycerate-independent phosphoglycerate mutase.